A 399-amino-acid polypeptide reads, in one-letter code: Phosphomevalonate dehydratase large subunit (399 aa).

(R)-5-phosphomevalonate contacts are provided by G54, V55, S56, N85, and P86. A [4Fe-4S] cluster-binding site is contributed by C125. Residues E144 and S145 each contribute to the (R)-5-phosphomevalonate site. Residues C298 and C355 each contribute to the [4Fe-4S] cluster site. Residue K375 coordinates (R)-5-phosphomevalonate.

The protein belongs to the AcnX type II large subunit family. As to quaternary structure, heterodimer composed of a large subunit (PMDh-L) and a small subunit (PMDh-S). The cofactor is [4Fe-4S] cluster.

It catalyses the reaction (R)-5-phosphomevalonate = (2E)-3-methyl-5-phosphooxypent-2-enoate + H2O. The protein operates within isoprenoid biosynthesis; isopentenyl diphosphate biosynthesis via mevalonate pathway. Its function is as follows. Component of a hydro-lyase that catalyzes the dehydration of mevalonate 5-phosphate (MVA5P) to form trans-anhydromevalonate 5-phosphate (tAHMP). Involved in the archaeal mevalonate (MVA) pathway, which provides fundamental precursors for isoprenoid biosynthesis, such as isopentenyl diphosphate (IPP) and dimethylallyl diphosphate (DMAPP). In Methanothermobacter thermautotrophicus (strain ATCC 29096 / DSM 1053 / JCM 10044 / NBRC 100330 / Delta H) (Methanobacterium thermoautotrophicum), this protein is Phosphomevalonate dehydratase large subunit.